An 82-amino-acid polypeptide reads, in one-letter code: DNA-directed RNA polymerase subunit Rpo5 (82 aa).

The protein belongs to the archaeal Rpo5/eukaryotic RPB5 RNA polymerase subunit family. Part of the RNA polymerase complex.

Its subcellular location is the cytoplasm. It catalyses the reaction RNA(n) + a ribonucleoside 5'-triphosphate = RNA(n+1) + diphosphate. Functionally, DNA-dependent RNA polymerase (RNAP) catalyzes the transcription of DNA into RNA using the four ribonucleoside triphosphates as substrates. The protein is DNA-directed RNA polymerase subunit Rpo5 of Pyrococcus abyssi (strain GE5 / Orsay).